The chain runs to 346 residues: Inner membrane protein YnjI (346 aa).

Residues 1-38 lie on the Periplasmic side of the membrane; the sequence is MKKVLLQNHPGSEKYSFNGWEIFNSNFERMIKENKAML. The helical transmembrane segment at 39-59 threads the bilayer; it reads LCKWGFYLTCVVAVMFVFAAI. The Cytoplasmic segment spans residues 60–68; it reads TSNGLNERG. The helical transmembrane segment at 69–89 threads the bilayer; it reads LITAGCSFLYLLIMMGLIVRA. The Periplasmic segment spans residues 90–234; the sequence is GFKAKKEQLH…DCANHSSGKS (145 aa). A helical transmembrane segment spans residues 235 to 255; sequence SAKLIWAAELSWMISISSTAF. At 256–346 the chain is on the cytoplasmic side; that stretch reads QNGTIEEELA…PWGASSVKYS (91 aa).

The protein resides in the cell inner membrane. This Escherichia coli (strain K12) protein is Inner membrane protein YnjI (ynjI).